The sequence spans 1410 residues: DNA-directed RNA polymerase subunit beta' (1410 aa).

The Zn(2+) site is built by C70, C72, C85, and C88. Residues D460, D462, and D464 each coordinate Mg(2+). Zn(2+)-binding residues include C814, C888, C895, and C898.

The protein belongs to the RNA polymerase beta' chain family. In terms of assembly, the RNAP catalytic core consists of 2 alpha, 1 beta, 1 beta' and 1 omega subunit. When a sigma factor is associated with the core the holoenzyme is formed, which can initiate transcription. Mg(2+) is required as a cofactor. It depends on Zn(2+) as a cofactor.

The enzyme catalyses RNA(n) + a ribonucleoside 5'-triphosphate = RNA(n+1) + diphosphate. Functionally, DNA-dependent RNA polymerase catalyzes the transcription of DNA into RNA using the four ribonucleoside triphosphates as substrates. The protein is DNA-directed RNA polymerase subunit beta' of Buchnera aphidicola subsp. Cinara cedri (strain Cc).